The chain runs to 211 residues: Large ribosomal subunit protein eL13 (211 aa).

It belongs to the eukaryotic ribosomal protein eL13 family. Component of the 60S large ribosomal subunit (LSU).

It is found in the cytoplasm. Its function is as follows. Component of the ribosome, a large ribonucleoprotein complex responsible for the synthesis of proteins in the cell. The small ribosomal subunit (SSU) binds messenger RNAs (mRNAs) and translates the encoded message by selecting cognate aminoacyl-transfer RNA (tRNA) molecules. The large subunit (LSU) contains the ribosomal catalytic site termed the peptidyl transferase center (PTC), which catalyzes the formation of peptide bonds, thereby polymerizing the amino acids delivered by tRNAs into a polypeptide chain. The nascent polypeptides leave the ribosome through a tunnel in the LSU and interact with protein factors that function in enzymatic processing, targeting, and the membrane insertion of nascent chains at the exit of the ribosomal tunnel. As part of the LSU, it is probably required for its formation and the maturation of rRNAs. The sequence is that of Large ribosomal subunit protein eL13 (rpl13) from Danio rerio (Zebrafish).